A 1080-amino-acid chain; its full sequence is MMIIEEYTPVPNTAFDFKIPDLIEMQLSSFRIFLKKGLIEELKDFSVISNSKKNLELRFFPEKYKLKRPKYNERTSIRRASTYTCQLYVPAKLTNKRTGEIQEQDVFLGEIPLMTGRGSFIINGSSRVIVNQIVRSPGIYYKREIDKKGRKTHSATIISNRGAWLRIETDKNGLIWARIGKIRKVSIMIVFKAMGLTKNEIFDALKYPQFLKKTIQETDPYLENDIQHDDDFENESTSTLLSTREILESRFFQSKYYDLGKVGRYKINKKLQLNIPENIRVLTVQDILAAVDYLINLEFNIGTLDDIDHLKNRRVRSVGELIQNQVRVGLGRLERMIYKRMGESSPDSLTLTSLVNPKPLVGAIREFFGSSQLSQFMDQTNPLSEITHKRRLSCLGPGGLSRERAGLAVRDIHPSHYGRICPIETPEGPNAGLIGSLATHSRVNEYGFLESPFYITKNRKVIKSELPIYLAPDQEDQFKVAPGDLLLSCYSSIENNYVPVRYKQEFTTSKAEEVDYVGISPTQAISIATSLIPFLEHDDANRALMGSNMQRQAVPLLKPNRPIVGTGFEEQVALDSGTVVICRHKGIVISVDSKTILVRSLRMNAKGIQHSHIDRYYLQKYNRSNQDTCINQKPVVSQGEWVQKGDILADGSATVNGELTLGQNILVAYMPWEGYNFEDAILISEKLVYEDIYTSIHIEKYEVDARKTKLGPEKITREIPNVNDHLLRNLDDNGIVIPGARVESGDILVGKVTPKEDLDQHPEGKLLRAIFGEKARDVRDSSLRVPNGVSGTVVNVRRLTGKELPSGVIMMVHVSISQKRKIQVGDKMAGRHGNKGIISKILPRQDMPYLQDGTPVDMVLNPLGVPSRMNVGQVFECLLGLAGEYLSENYKLMPFDEMYGKETSRGLVYSKLYEARQKTGYPWLFNIQSPGKSKLFDGRTGESFDQPVTIGKAYMLKLVHLVDDKIHARSTGPYSLVTQQPLGGRAKHGGQRLGEMEVWALEGFGAAYTLQELLTIKSDDMKGRNDALNAIIKGRPIPKPGTPESFKVLIRELQSLCLDIGVYKVHKSNKNQEIDLMQNF.

It belongs to the RNA polymerase beta chain family. In plastids the minimal PEP RNA polymerase catalytic core is composed of four subunits: alpha, beta, beta', and beta''. When a (nuclear-encoded) sigma factor is associated with the core the holoenzyme is formed, which can initiate transcription.

The protein localises to the plastid. The protein resides in the chloroplast. It catalyses the reaction RNA(n) + a ribonucleoside 5'-triphosphate = RNA(n+1) + diphosphate. Functionally, DNA-dependent RNA polymerase catalyzes the transcription of DNA into RNA using the four ribonucleoside triphosphates as substrates. The sequence is that of DNA-directed RNA polymerase subunit beta from Mesostigma viride (Green alga).